The chain runs to 368 residues: tRNA-specific 2-thiouridylase MnmA (368 aa).

Residues 11–18 and M37 each bind ATP; that span reads GMSGGVDS. Positions 97–99 are interaction with target base in tRNA; the sequence is NPD. The active-site Nucleophile is the C102. C102 and C199 are joined by a disulfide. G127 is a binding site for ATP. Residues 149 to 151 form an interaction with tRNA region; sequence KDQ. Residue C199 is the Cysteine persulfide intermediate of the active site. Residues 311 to 312 form an interaction with tRNA region; that stretch reads RY.

It belongs to the MnmA/TRMU family. As to quaternary structure, interacts with TusE.

The protein localises to the cytoplasm. The enzyme catalyses S-sulfanyl-L-cysteinyl-[protein] + uridine(34) in tRNA + AH2 + ATP = 2-thiouridine(34) in tRNA + L-cysteinyl-[protein] + A + AMP + diphosphate + H(+). In terms of biological role, catalyzes the 2-thiolation of uridine at the wobble position (U34) of tRNA(Lys), tRNA(Glu) and tRNA(Gln), leading to the formation of s(2)U34, the first step of tRNA-mnm(5)s(2)U34 synthesis. Sulfur is provided by IscS, via a sulfur-relay system. Binds ATP and its substrate tRNAs. This Shigella dysenteriae serotype 1 (strain Sd197) protein is tRNA-specific 2-thiouridylase MnmA.